Here is a 424-residue protein sequence, read N- to C-terminus: GDP-fucose protein O-fucosyltransferase 2 (424 aa).

The first 20 residues, 1–20 (MHFFPIQLLVLFFAEKIAFA), serve as a signal peptide directing secretion. Residue 51–55 (GEGFN) coordinates GDP-beta-L-fucose. The active-site Proton acceptor is the glutamate 52. A disulfide bridge links cysteine 154 with cysteine 187. N-linked (GlcNAc...) asparagine glycosylation occurs at asparagine 205. Residues 288–290 (HWR), aspartate 366, and 383–384 (TF) each bind GDP-beta-L-fucose. A disulfide bridge links cysteine 407 with cysteine 414.

The protein belongs to the glycosyltransferase 68 family. As to expression, expressed in the anterior part of embryos, in the hypodermal and neuronal cells of the head. Expressed at different levels in a variety of cell types after hatching, including neuronal, hypodermal, muscle, intestinal, and somatic gonadal cells. Expressed in the nerve ring around the pharynx, in dorsal and ventral nerve cords, intestine, and a variety of hypodermal cells of L1-L3 larvae. Expressed in gonadal sheath cells, spermatheca, and tissues surrounding the vulva of adult hermaphrodites, and in the body wall muscle and hypodermal cells of adults of both sexes.

Its subcellular location is the endoplasmic reticulum. It localises to the golgi apparatus. It carries out the reaction L-seryl-[protein] + GDP-beta-L-fucose = 3-O-(alpha-L-fucosyl)-L-seryl-[protein] + GDP + H(+). It catalyses the reaction L-threonyl-[protein] + GDP-beta-L-fucose = 3-O-(alpha-L-fucosyl)-L-threonyl-[protein] + GDP + H(+). It functions in the pathway protein modification; protein glycosylation. Catalyzes the reaction that attaches fucose through an O-glycosidic linkage to a conserved serine or threonine residue in the consensus sequence C1-X-X-S/T-C2 of thrombospondin type I repeats (TSRs) where C1 and C2 are the first and second cysteines of the repeat, respectively. O-fucosylates members of several protein families including the ADAMTS superfamily and the thrombospondin (TSP) and spondin families. The polypeptide is GDP-fucose protein O-fucosyltransferase 2 (pad-2) (Caenorhabditis elegans).